The following is a 621-amino-acid chain: Zinc metalloproteinase-disintegrin-like NaMP (621 aa).

The N-terminal stretch at 1-20 (MIQPLLVAICLVVFPYQGSS) is a signal peptide. Positions 21–188 (TILESGKVRD…GESDETIKKI (168 aa)) are excised as a propeptide. Residues 206–402 (KHIELYMVAD…KSAQCILNDP (197 aa)) enclose the Peptidase M12B domain. 3 N-linked (GlcNAc...) asparagine glycosylation sites follow: asparagine 225, asparagine 268, and asparagine 319. Cystine bridges form between cysteine 317–cysteine 397, cysteine 357–cysteine 381, cysteine 359–cysteine 364, cysteine 413–cysteine 442, cysteine 424–cysteine 437, cysteine 426–cysteine 432, cysteine 436–cysteine 459, cysteine 450–cysteine 456, cysteine 455–cysteine 481, cysteine 468–cysteine 488, cysteine 475–cysteine 507, cysteine 500–cysteine 512, cysteine 519–cysteine 569, cysteine 534–cysteine 579, cysteine 547–cysteine 557, cysteine 564–cysteine 605, and cysteine 599–cysteine 610. Residue histidine 342 coordinates Zn(2+). Residue glutamate 343 is part of the active site. The Zn(2+) site is built by histidine 346 and histidine 352. Residues 410-496 (TAICGNGFVE…ECPMNHFHMN (87 aa)) form the Disintegrin domain. The D/ECD-tripeptide signature appears at 474–476 (DCD). The N-linked (GlcNAc...) asparagine glycan is linked to asparagine 551.

Belongs to the venom metalloproteinase (M12B) family. P-III subfamily. P-IIIa sub-subfamily. In terms of assembly, monomer. Zn(2+) is required as a cofactor. In terms of tissue distribution, expressed by the venom gland.

Its subcellular location is the secreted. In terms of biological role, snake venom zinc metalloproteinase that inhibits platelet aggregation and degrades fibrinogen. In Naja atra (Chinese cobra), this protein is Zinc metalloproteinase-disintegrin-like NaMP.